The chain runs to 302 residues: Zygote arrest protein 2.S (302 aa).

3 disordered regions span residues 15-46, 88-117, and 138-195; these read YGGN…SEPP, VDTG…PTDC, and LPQG…EPNK. Basic and acidic residues predominate over residues 159–178; the sequence is LKDRGPSPEEKEPETKEALE. The 3CxxC-type zinc-finger motif lies at 203 to 288; that stretch reads QKYGYFHCKD…QELCGRCKNK (86 aa).

It belongs to the ZAR1 family. In terms of tissue distribution, oocyte-specific.

It localises to the cytoplasm. The protein resides in the cytoplasmic ribonucleoprotein granule. Its function is as follows. mRNA-binding protein required for maternal mRNA storage, translation and degradation during oocyte maturation. Probably promotes formation of some phase-separated membraneless compartment that stores maternal mRNAs in oocytes: acts by undergoing liquid-liquid phase separation upon binding to maternal mRNAs. Binds to the 3'-UTR of maternal mRNAs, inhibiting their translation. This is Zygote arrest protein 2.S from Xenopus laevis (African clawed frog).